A 543-amino-acid polypeptide reads, in one-letter code: MTRYIFVTGGVVSSLGKGIASASLAAILEARGLKVTMLKLDPYINVDPGTMSPFQHGEVFVTHDGAETDLDLGHYERFIRTTMTQNNNFTTGRVYEHVLRKERRGDYLGATIQVIPHITDEIKRRIIKGAGDADVALVEIGGTVGDIESQPFLEAIRQLRFEVGARRAMLMHLTLVPYIATAGETKTKPTQHSVKELRSIGLQPDVLVCRSDHPIDVSSRRKIAQFTNVEERAVIALEDADTIYKIPGILHSQGLDDFVVERFGLQCEGADLSEWDKVVDAKLNPEHEVTIAMVGKYMELLDAYKSLIEAMSHAGITNRTKVNLRYIDSEDIENQGTGLLEGVDAILVPGGFGLRGVEGKITAVQFARENKVPYLGICLGMQVAVIEFARNVLGWKDANSTEFNRTSAHAVVGLITEWEDATGAVETRTESSDLGGTMRLGAQDCQLEAGSLVHDCYRKDVIVERHRHRYEVNNNLLPQLIEAGLKISGRSGDGALVEVVEAPDHPWFVACQFHPEFTSTPRDGHPLFSGFVKAALAQHQKNS.

Residues 1-265 (MTRYIFVTGG…DDFVVERFGL (265 aa)) form an amidoligase domain region. Position 13 (Ser-13) interacts with CTP. Ser-13 contacts UTP. Residues 14–19 (SLGKGI) and Asp-71 each bind ATP. The Mg(2+) site is built by Asp-71 and Glu-139. Residues 146 to 148 (DIE), 186 to 191 (KTKPTQ), and Lys-222 contribute to the CTP site. Residues 186–191 (KTKPTQ) and Lys-222 contribute to the UTP site. The 252-residue stretch at 290–541 (TIAMVGKYME…VKAALAQHQK (252 aa)) folds into the Glutamine amidotransferase type-1 domain. Gly-351 is a binding site for L-glutamine. Cys-378 serves as the catalytic Nucleophile; for glutamine hydrolysis. Residues 379 to 382 (LGMQ), Glu-402, and Arg-469 contribute to the L-glutamine site. Residues His-514 and Glu-516 contribute to the active site.

Belongs to the CTP synthase family. Homotetramer.

The enzyme catalyses UTP + L-glutamine + ATP + H2O = CTP + L-glutamate + ADP + phosphate + 2 H(+). It carries out the reaction L-glutamine + H2O = L-glutamate + NH4(+). It catalyses the reaction UTP + NH4(+) + ATP = CTP + ADP + phosphate + 2 H(+). It participates in pyrimidine metabolism; CTP biosynthesis via de novo pathway; CTP from UDP: step 2/2. Its activity is regulated as follows. Allosterically activated by GTP, when glutamine is the substrate; GTP has no effect on the reaction when ammonia is the substrate. The allosteric effector GTP functions by stabilizing the protein conformation that binds the tetrahedral intermediate(s) formed during glutamine hydrolysis. Inhibited by the product CTP, via allosteric rather than competitive inhibition. In terms of biological role, catalyzes the ATP-dependent amination of UTP to CTP with either L-glutamine or ammonia as the source of nitrogen. Regulates intracellular CTP levels through interactions with the four ribonucleotide triphosphates. The protein is CTP synthase of Pseudomonas savastanoi pv. phaseolicola (strain 1448A / Race 6) (Pseudomonas syringae pv. phaseolicola (strain 1448A / Race 6)).